Here is a 356-residue protein sequence, read N- to C-terminus: MLDIHNPTTDHQDIRDLTIIGGGPTGIFAAFQCGMNNISCRIIESMSQLGGQLAALYPEKHIYDVAGFPEVPAIDLVESLWAQAERYNPDVVLGEAVTKYTKLDDGTFETRTNAGNVYRSRAVLIAAGLGAFEPRKLPQLGNIDHLTGSSVYYAVKSVDNFKGKRVVIVGGGDSALDWTVGLLKNAESVTLVHRAKEFQGHGKTAHEVEQAKADGLIDVHLQTEVASIEESNGALTHVHLRSSNGEEWTVEADRLLILIGFKSNLGPLAGWDLELAENALVVDSHMKTSVDGLYAAGDIAHYPGKLKIIQTGLSEATMAVRHSLSYIKPGEKIRNVFSSVKMAKEKKAAEQEKKAE.

FAD-binding residues include Thr-25, Glu-44, Gln-52, Tyr-57, Val-97, Phe-132, Asp-298, and Ser-339.

It belongs to the ferredoxin--NADP reductase type 2 family. As to quaternary structure, homodimer. Requires FAD as cofactor.

It carries out the reaction 2 reduced [2Fe-2S]-[ferredoxin] + NADP(+) + H(+) = 2 oxidized [2Fe-2S]-[ferredoxin] + NADPH. This chain is Ferredoxin--NADP reductase, found in Chlorobaculum parvum (strain DSM 263 / NCIMB 8327) (Chlorobium vibrioforme subsp. thiosulfatophilum).